We begin with the raw amino-acid sequence, 409 residues long: Lissencephaly-1 homolog (409 aa).

Residues 7–39 (QREELNQAIADYLGTNGYADSLEAFRKEADLST) enclose the LisH domain. Positions 54–81 (TSVIRLQKKVMELEAKLTEAEKEVIEGA) form a coiled coil. 7 WD repeats span residues 104–145 (GHRA…RSLK), 146–185 (GHTD…ACVK), 189–228 (GHDH…CVKT), 231–270 (GHRE…CKVE), 273–332 (DHEH…CLLT), 335–374 (GHDN…CMKT), and 377–409 (AHQH…WECR).

Belongs to the WD repeat LIS1/nudF family.

The protein localises to the cytoplasm. The protein resides in the cytoskeleton. It localises to the microtubule organizing center. It is found in the centrosome. Its function is as follows. Positively regulates the activity of the minus-end directed microtubule motor protein dynein. May enhance dynein-mediated microtubule sliding by targeting dynein to the microtubule plus end. Required for several dynein- and microtubule-dependent processes. This is Lissencephaly-1 homolog from Drosophila willistoni (Fruit fly).